The following is a 1208-amino-acid chain: E3 ubiquitin-protein ligase DZIP3 (1208 aa).

Positions 10-29 (VRHPAVEDQRKEETENKLEK) are enriched in basic and acidic residues. Disordered stretches follow at residues 10-38 (VRHPAVEDQRKEETENKLEKSSGQLNKQE) and 637-698 (GTSI…PHSV). Coiled coils occupy residues 14–43 (AVEDQRKEETENKLEKSSGQLNKQENDIPT), 647–676 (ESLKDLQEVKSKQRKKKKTKNKKNKDSKED), 792–853 (IASL…SKLN), and 904–939 (QLKAAVDSWNAIVADVRNKIAFLRTQYNEQINKVKQ). The span at 637–647 (GTSIPSESSTE) shows a compositional bias: polar residues. A compositionally biased stretch (basic and acidic residues) spans 648 to 657 (SLKDLQEVKS). Residues 658–669 (KQRKKKKTKNKK) are compositionally biased toward basic residues. The span at 670–693 (NKDSKEDQVPYVVEKEEQLRKEQA) shows a compositional bias: basic and acidic residues. The interval 1088-1145 (KSQSQGKSVSNVNCVSPSHSPSQPDAAQPPKPAWRPLTSQGPATWEGASNPDEEEEEE) is disordered. The segment covering 1089-1112 (SQSQGKSVSNVNCVSPSHSPSQPD) has biased composition (polar residues). An RING-type; atypical zinc finger spans residues 1148–1188 (CVICHENLSPENLSVLPCAHKFHAQCIRPWLMQQGTCPTCR).

As to quaternary structure, interacts with DAZ proteins. Widely expressed at low level. Highly expressed in skeletal muscle, kidney and heart. Expressed at low level in placenta, lung, brain, liver and pancreas.

The protein resides in the cytoplasm. It carries out the reaction S-ubiquitinyl-[E2 ubiquitin-conjugating enzyme]-L-cysteine + [acceptor protein]-L-lysine = [E2 ubiquitin-conjugating enzyme]-L-cysteine + N(6)-ubiquitinyl-[acceptor protein]-L-lysine.. The protein operates within protein modification; protein ubiquitination. E3 Ubiquitin ligase proteins mediate ubiquitination and subsequent proteasomal degradation of target proteins. E3 ubiquitin ligases accept ubiquitin from an E2 ubiquitin-conjugating enzyme in the form of a thioester and then directly transfers the ubiquitin to targeted substrates. Able to specifically bind RNA. This chain is E3 ubiquitin-protein ligase DZIP3 (DZIP3), found in Homo sapiens (Human).